A 392-amino-acid polypeptide reads, in one-letter code: 1-deoxy-D-xylulose 5-phosphate reductoisomerase (392 aa).

5 residues coordinate NADPH: Thr10, Gly11, Ser12, Ile13, and Asn124. Position 125 (Lys125) interacts with 1-deoxy-D-xylulose 5-phosphate. Glu126 is an NADPH binding site. Asp150 provides a ligand contact to Mn(2+). Ser151, Glu152, Ser180, and His203 together coordinate 1-deoxy-D-xylulose 5-phosphate. Position 152 (Glu152) interacts with Mn(2+). An NADPH-binding site is contributed by Gly209. Residues Ser216, Asn221, Lys222, and Glu225 each contribute to the 1-deoxy-D-xylulose 5-phosphate site. A Mn(2+)-binding site is contributed by Glu225.

The protein belongs to the DXR family. It depends on Mg(2+) as a cofactor. Mn(2+) serves as cofactor.

The catalysed reaction is 2-C-methyl-D-erythritol 4-phosphate + NADP(+) = 1-deoxy-D-xylulose 5-phosphate + NADPH + H(+). Its pathway is isoprenoid biosynthesis; isopentenyl diphosphate biosynthesis via DXP pathway; isopentenyl diphosphate from 1-deoxy-D-xylulose 5-phosphate: step 1/6. Functionally, catalyzes the NADPH-dependent rearrangement and reduction of 1-deoxy-D-xylulose-5-phosphate (DXP) to 2-C-methyl-D-erythritol 4-phosphate (MEP). The polypeptide is 1-deoxy-D-xylulose 5-phosphate reductoisomerase (Saccharophagus degradans (strain 2-40 / ATCC 43961 / DSM 17024)).